Consider the following 373-residue polypeptide: Phosphoserine aminotransferase (373 aa).

Arginine 41 contributes to the L-glutamate binding site. Pyridoxal 5'-phosphate is bound by residues 75-76 (GT), tryptophan 101, threonine 152, aspartate 172, and glutamine 195. Residue lysine 196 is modified to N6-(pyridoxal phosphate)lysine. 236–237 (NT) lines the pyridoxal 5'-phosphate pocket.

Belongs to the class-V pyridoxal-phosphate-dependent aminotransferase family. SerC subfamily. Homodimer. Pyridoxal 5'-phosphate is required as a cofactor.

The protein resides in the cytoplasm. The enzyme catalyses O-phospho-L-serine + 2-oxoglutarate = 3-phosphooxypyruvate + L-glutamate. It catalyses the reaction 4-(phosphooxy)-L-threonine + 2-oxoglutarate = (R)-3-hydroxy-2-oxo-4-phosphooxybutanoate + L-glutamate. The protein operates within amino-acid biosynthesis; L-serine biosynthesis; L-serine from 3-phospho-D-glycerate: step 2/3. Catalyzes the reversible conversion of 3-phosphohydroxypyruvate to phosphoserine and of 3-hydroxy-2-oxo-4-phosphonooxybutanoate to phosphohydroxythreonine. In Lactobacillus helveticus (strain DPC 4571), this protein is Phosphoserine aminotransferase.